Consider the following 244-residue polypeptide: Putative ABC transporter ATP-binding protein gll0289 (244 aa).

The region spanning 5 to 237 is the ABC transporter domain; that stretch reads LVVEELHYSY…RVLLETHGLE (233 aa). 38–45 serves as a coordination point for ATP; sequence GPNGSGKS.

The protein belongs to the ABC transporter superfamily.

Its subcellular location is the cell inner membrane. In terms of biological role, probably part of an ABC transporter complex. Responsible for energy coupling to the transport system. This Gloeobacter violaceus (strain ATCC 29082 / PCC 7421) protein is Putative ABC transporter ATP-binding protein gll0289.